Here is a 253-residue protein sequence, read N- to C-terminus: Phycoerythrobilin:ferredoxin oxidoreductase (253 aa).

Belongs to the HY2 family.

It catalyses the reaction (3Z)-phycoerythrobilin + oxidized 2[4Fe-4S]-[ferredoxin] = 15,16-dihydrobiliverdin + reduced 2[4Fe-4S]-[ferredoxin] + 2 H(+). Functionally, catalyzes the two-electron reduction of the C2 and C3(1) diene system of 15,16-dihydrobiliverdin. The polypeptide is Phycoerythrobilin:ferredoxin oxidoreductase (pebB) (Prochlorococcus marinus (strain MIT 9215)).